Here is a 346-residue protein sequence, read N- to C-terminus: S-adenosylmethionine:tRNA ribosyltransferase-isomerase (346 aa).

It belongs to the QueA family. In terms of assembly, monomer.

Its subcellular location is the cytoplasm. The enzyme catalyses 7-aminomethyl-7-carbaguanosine(34) in tRNA + S-adenosyl-L-methionine = epoxyqueuosine(34) in tRNA + adenine + L-methionine + 2 H(+). It functions in the pathway tRNA modification; tRNA-queuosine biosynthesis. Transfers and isomerizes the ribose moiety from AdoMet to the 7-aminomethyl group of 7-deazaguanine (preQ1-tRNA) to give epoxyqueuosine (oQ-tRNA). The chain is S-adenosylmethionine:tRNA ribosyltransferase-isomerase from Borreliella afzelii (strain PKo) (Borrelia afzelii).